A 562-amino-acid chain; its full sequence is Exonuclease subunit 2 (562 aa).

36-43 (GKNGGGKS) lines the ATP pocket.

To phage T5 protein D13 and to yeast RAD52. Consists of two subunits: Gp47 and Gp46.

Exonuclease involved in phage DNA recombination, replication, and repair. The polypeptide is Exonuclease subunit 2 (46) (Escherichia phage RB69 (Bacteriophage RB69)).